The following is a 57-amino-acid chain: NLYQFKNMIQCANRGSRHWLAYADYGCYCGWGGSGTPVDELDRCCKTHDDCYTEAGK.

3 residues coordinate Ca(2+): Tyr28, Gly30, and Gly32. Cysteines 29 and 45 form a disulfide. The active site involves His48. Asp49 contacts Ca(2+).

It depends on Ca(2+) as a cofactor. Expressed by the venom gland.

It is found in the secreted. It carries out the reaction a 1,2-diacyl-sn-glycero-3-phosphocholine + H2O = a 1-acyl-sn-glycero-3-phosphocholine + a fatty acid + H(+). In terms of biological role, snake venom phospholipase A2 (PLA2) that inhibits collagen-induced platelet aggregation. In terms of inhibition of platelet aggregation, superbin b is more potent as superbin c, and d. PLA2 catalyzes the calcium-dependent hydrolysis of the 2-acyl groups in 3-sn-phosphoglycerides. The polypeptide is Phospholipase A2 superbin b (Austrelaps superbus (Lowland copperhead snake)).